The following is a 563-amino-acid chain: MFPGSTWTVIVEQIAEYEEVIDPKAFFDKIISLWKEYPNAISNRITTSVSVDTDSDLWNEVLRTFETHYKFCPRDCSEIAITKIIHKDLANNKFSDNAFEVSYYEEELLVRFYPITLDGMQHPHFESPYSIAIKIPTDTSIQLQFLKQANSSQEHFEFMKKQAFKQLYTWLKGIDLSKSSRKTNSLLDKESYIKTYRHIREDYGRGMIKGWTENSNPQKSIFEDCGIASYINELVNSDLLPKPNKFVDIGCGNGLLVHLLNKIGMSGYGIDVRHRNIWKTTLKDVDLREMPVDPQIVVQNEPHFDLDVDLLIGNHSDELTPWIPVMAAKLNCNFFLIPCCPFNFFGKYANNGSHLGPKRIVSQYESFFEWTVSVAERLGFDVKIDRLAIPSTKRLCIIGRVPEGGLCPNVDETINSMTEGQKFIARPKEIKTTNCMNIPVTDRERIAKKLFDFVLNYSDAVRDGWRCGGEVPLAQLAALLTEEDKKLMKDQDGGLQTFLRNQHQIFHVYQATARLRDFRQPVVQKRQSWKPKKAETIRKAPCWMSLHHPDGCPVGQEACRYEH.

A C3H1-type zinc finger spans residues 536-563; it reads TIRKAPCWMSLHHPDGCPVGQEACRYEH.

Belongs to the TRM44 family.

It localises to the cytoplasm. It catalyses the reaction uridine(44) in tRNA(Ser) + S-adenosyl-L-methionine = 2'-O-methyluridine(44) in tRNA(Ser) + S-adenosyl-L-homocysteine + H(+). Its function is as follows. Probable adenosyl-L-methionine (AdoMet)-dependent tRNA (uracil-O(2)-)-methyltransferase. The protein is Probable tRNA (uracil-O(2)-)-methyltransferase of Caenorhabditis elegans.